The following is a 160-amino-acid chain: uncharacterized protein (160 aa).

This is an uncharacterized protein from Bacillus subtilis (strain 168).